A 335-amino-acid chain; its full sequence is Glycerol-3-phosphate dehydrogenase [NAD(P)+] (335 aa).

NADPH-binding residues include Ser-15, Tyr-16, Arg-36, and Lys-110. 3 residues coordinate sn-glycerol 3-phosphate: Lys-110, Gly-139, and Thr-141. Ala-143 contributes to the NADPH binding site. Sn-glycerol 3-phosphate-binding residues include Lys-195, Asp-248, Ser-258, Arg-259, and Asn-260. Residue Lys-195 is the Proton acceptor of the active site. Position 259 (Arg-259) interacts with NADPH. NADPH-binding residues include Val-283 and Glu-285.

The protein belongs to the NAD-dependent glycerol-3-phosphate dehydrogenase family.

The protein resides in the cytoplasm. It catalyses the reaction sn-glycerol 3-phosphate + NAD(+) = dihydroxyacetone phosphate + NADH + H(+). The enzyme catalyses sn-glycerol 3-phosphate + NADP(+) = dihydroxyacetone phosphate + NADPH + H(+). Its pathway is membrane lipid metabolism; glycerophospholipid metabolism. Its function is as follows. Catalyzes the reduction of the glycolytic intermediate dihydroxyacetone phosphate (DHAP) to sn-glycerol 3-phosphate (G3P), the key precursor for phospholipid synthesis. The protein is Glycerol-3-phosphate dehydrogenase [NAD(P)+] of Pseudoalteromonas translucida (strain TAC 125).